A 305-amino-acid polypeptide reads, in one-letter code: Ribonuclease BN (305 aa).

His-64, His-66, Asp-68, His-69, His-141, Asp-212, and His-270 together coordinate Zn(2+). Asp-68 serves as the catalytic Proton acceptor.

This sequence belongs to the RNase Z family. RNase BN subfamily. In terms of assembly, homodimer. Zn(2+) is required as a cofactor.

In terms of biological role, zinc phosphodiesterase, which has both exoribonuclease and endoribonuclease activities. In Shigella boydii serotype 18 (strain CDC 3083-94 / BS512), this protein is Ribonuclease BN.